Here is a 225-residue protein sequence, read N- to C-terminus: UPF0173 metal-dependent hydrolase Pcal_1074 (225 aa).

Belongs to the UPF0173 family.

The protein is UPF0173 metal-dependent hydrolase Pcal_1074 of Pyrobaculum calidifontis (strain DSM 21063 / JCM 11548 / VA1).